The sequence spans 529 residues: Glucose-6-phosphate isomerase (529 aa).

The Proton donor role is filled by Glu-323. Catalysis depends on residues His-352 and Lys-456.

This sequence belongs to the GPI family.

The protein resides in the cytoplasm. It carries out the reaction alpha-D-glucose 6-phosphate = beta-D-fructose 6-phosphate. It functions in the pathway carbohydrate biosynthesis; gluconeogenesis. The protein operates within carbohydrate degradation; glycolysis; D-glyceraldehyde 3-phosphate and glycerone phosphate from D-glucose: step 2/4. Functionally, catalyzes the reversible isomerization of glucose-6-phosphate to fructose-6-phosphate. The polypeptide is Glucose-6-phosphate isomerase (Geobacter sulfurreducens (strain ATCC 51573 / DSM 12127 / PCA)).